Consider the following 327-residue polypeptide: Methionyl-tRNA formyltransferase (327 aa).

121 to 124 contacts (6S)-5,6,7,8-tetrahydrofolate; sequence SLLP.

Belongs to the Fmt family.

It carries out the reaction L-methionyl-tRNA(fMet) + (6R)-10-formyltetrahydrofolate = N-formyl-L-methionyl-tRNA(fMet) + (6S)-5,6,7,8-tetrahydrofolate + H(+). Its function is as follows. Attaches a formyl group to the free amino group of methionyl-tRNA(fMet). The formyl group appears to play a dual role in the initiator identity of N-formylmethionyl-tRNA by promoting its recognition by IF2 and preventing the misappropriation of this tRNA by the elongation apparatus. This Burkholderia pseudomallei (strain 1710b) protein is Methionyl-tRNA formyltransferase.